Here is a 257-residue protein sequence, read N- to C-terminus: Triosephosphate isomerase (257 aa).

Substrate is bound by residues Asn11 and Lys13. The active-site Electrophile is the His96. The Proton acceptor role is filled by Glu170.

This sequence belongs to the triosephosphate isomerase family. As to quaternary structure, homodimer.

The catalysed reaction is D-glyceraldehyde 3-phosphate = dihydroxyacetone phosphate. The protein operates within carbohydrate biosynthesis; gluconeogenesis. It functions in the pathway carbohydrate degradation; glycolysis; D-glyceraldehyde 3-phosphate from glycerone phosphate: step 1/1. The chain is Triosephosphate isomerase from Giardia intestinalis (Giardia lamblia).